Reading from the N-terminus, the 157-residue chain is Probable succinate transporter subunit YjjB (157 aa).

4 helical membrane-spanning segments follow: residues 8–28 (LALA…AMVF), 50–70 (MILM…SMLV), 87–107 (VFTV…TAMI), and 129–149 (FLTA…PGLW).

Belongs to the ThrE exporter (TC 2.A.79) family. As to quaternary structure, the transporter is composed of YjjB and YjjP.

It is found in the cell inner membrane. In terms of biological role, involved in succinate export with YjjP. Both proteins are required for export. The chain is Probable succinate transporter subunit YjjB from Escherichia coli O127:H6 (strain E2348/69 / EPEC).